We begin with the raw amino-acid sequence, 219 residues long: Large ribosomal subunit protein bL25 (219 aa).

The disordered stretch occupies residues 193 to 219 (VSSTELEETPEVPASAVPTTDQGESAE). Residues 209-219 (VPTTDQGESAE) are compositionally biased toward polar residues.

It belongs to the bacterial ribosomal protein bL25 family. CTC subfamily. As to quaternary structure, part of the 50S ribosomal subunit; part of the 5S rRNA/L5/L18/L25 subcomplex. Contacts the 5S rRNA. Binds to the 5S rRNA independently of L5 and L18.

This is one of the proteins that binds to the 5S RNA in the ribosome where it forms part of the central protuberance. The chain is Large ribosomal subunit protein bL25 from Legionella pneumophila (strain Corby).